The following is a 479-amino-acid chain: Beta-amyrin 28-monooxygenase (479 aa).

Residues 5 to 25 (FYLSLLLLFVTFISLSLFFIF) form a helical membrane-spanning segment. Cysteine 426 is a binding site for heme.

Belongs to the cytochrome P450 family. It depends on heme as a cofactor. Expressed in roots, nodules and flowers.

The protein localises to the membrane. The enzyme catalyses beta-amyrin + 3 reduced [NADPH--hemoprotein reductase] + 3 O2 = oleanolate + 3 oxidized [NADPH--hemoprotein reductase] + 4 H2O + 4 H(+). Functionally, catalyzes the carboxylation of beta-amyrin at the C-28 position to form oleanolic acid. Involved in an early step in the hemolytic saponin biosynthetic pathway. Catalyzes the carboxylation of alpha-amyrin and lupeol at the C-28 position to form ursolic acid and betulinic acid respectively. The sequence is that of Beta-amyrin 28-monooxygenase from Medicago truncatula (Barrel medic).